The sequence spans 307 residues: Potassium channel subfamily K member 7 (307 aa).

Topologically, residues 1–10 are cytoplasmic; it reads MGGLRPWSRY. The chain crosses the membrane as a helical span at residues 11 to 31; the sequence is GLLVVAHLLALGLGAVVFQAL. Asparagine 83 carries an N-linked (GlcNAc...) asparagine glycan. The segment at residues 92–119 is an intramembrane region (pore-forming); the sequence is LPSALLFAASILTTTGYGHMAPLSPGGK. Residues 120 to 140 form a helical membrane-spanning segment; it reads AFCMVYAALGLPASLALVATL. At 141–170 the chain is on the cytoplasmic side; that stretch reads RHCLLPVLSRPRAWVAVHWQLSPARAALLQ. A helical membrane pass occupies residues 171–191; that stretch reads AVALGLLVASSFVLLPALVLW. The segment at residues 199–227 is an intramembrane region (pore-forming); that stretch reads LLGAVYFCFSSLSTIGLEDLLPGRGRSLH. Residues 233-253 form a helical membrane-spanning segment; sequence LGQLALLGYLLLGLLAMLLAV. The Cytoplasmic segment spans residues 254–307; sequence ETFSELPQVRAMGKFFRPSGPVTAEDQGGILGQDELALSTLPPAAPASGQAPAC.

The protein belongs to the two pore domain potassium channel (TC 1.A.1.8) family. Homodimer.

It is found in the membrane. Functionally, probable potassium channel subunit. No channel activity observed in vitro as protein remains in the endoplasmic reticulum. May need to associate with an as yet unknown partner in order to reach the plasma membrane. The polypeptide is Potassium channel subfamily K member 7 (KCNK7) (Homo sapiens (Human)).